We begin with the raw amino-acid sequence, 210 residues long: ATP-dependent Clp protease proteolytic subunit (210 aa).

Serine 106 (nucleophile) is an active-site residue. Histidine 131 is an active-site residue.

The protein belongs to the peptidase S14 family. As to quaternary structure, fourteen ClpP subunits assemble into 2 heptameric rings which stack back to back to give a disk-like structure with a central cavity, resembling the structure of eukaryotic proteasomes.

The protein localises to the cytoplasm. The catalysed reaction is Hydrolysis of proteins to small peptides in the presence of ATP and magnesium. alpha-casein is the usual test substrate. In the absence of ATP, only oligopeptides shorter than five residues are hydrolyzed (such as succinyl-Leu-Tyr-|-NHMec, and Leu-Tyr-Leu-|-Tyr-Trp, in which cleavage of the -Tyr-|-Leu- and -Tyr-|-Trp bonds also occurs).. In terms of biological role, cleaves peptides in various proteins in a process that requires ATP hydrolysis. Has a chymotrypsin-like activity. Plays a major role in the degradation of misfolded proteins. The chain is ATP-dependent Clp protease proteolytic subunit from Bradyrhizobium sp. (strain BTAi1 / ATCC BAA-1182).